The chain runs to 241 residues: Carboxy-S-adenosyl-L-methionine synthase (241 aa).

S-adenosyl-L-methionine is bound by residues Tyr38, 63–65 (GCS), 88–89 (DN), 116–117 (DI), Asn131, and Arg198.

The protein belongs to the class I-like SAM-binding methyltransferase superfamily. Cx-SAM synthase family. As to quaternary structure, homodimer.

It catalyses the reaction prephenate + S-adenosyl-L-methionine = carboxy-S-adenosyl-L-methionine + 3-phenylpyruvate + H2O. Catalyzes the conversion of S-adenosyl-L-methionine (SAM) to carboxy-S-adenosyl-L-methionine (Cx-SAM). The protein is Carboxy-S-adenosyl-L-methionine synthase of Pasteurella multocida (strain Pm70).